A 338-amino-acid chain; its full sequence is Holliday junction branch migration complex subunit RuvB (338 aa).

The segment at 4 to 184 (ADRLMSAAAV…FGIVQRLEFY (181 aa)) is large ATPase domain (RuvB-L). ATP contacts are provided by residues isoleucine 23, arginine 24, glycine 65, lysine 68, threonine 69, threonine 70, 131-133 (EDY), arginine 174, tyrosine 184, and arginine 221. Threonine 69 provides a ligand contact to Mg(2+). The interval 185–255 (QTGDLQHIVS…VAVSALNMLN (71 aa)) is small ATPAse domain (RuvB-S). The tract at residues 258-338 (TEGFDFMDRK…GLEEHGGDPE (81 aa)) is head domain (RuvB-H). 3 residues coordinate DNA: arginine 294, arginine 313, and arginine 318.

Belongs to the RuvB family. In terms of assembly, homohexamer. Forms an RuvA(8)-RuvB(12)-Holliday junction (HJ) complex. HJ DNA is sandwiched between 2 RuvA tetramers; dsDNA enters through RuvA and exits via RuvB. An RuvB hexamer assembles on each DNA strand where it exits the tetramer. Each RuvB hexamer is contacted by two RuvA subunits (via domain III) on 2 adjacent RuvB subunits; this complex drives branch migration. In the full resolvosome a probable DNA-RuvA(4)-RuvB(12)-RuvC(2) complex forms which resolves the HJ.

It localises to the cytoplasm. The enzyme catalyses ATP + H2O = ADP + phosphate + H(+). The RuvA-RuvB-RuvC complex processes Holliday junction (HJ) DNA during genetic recombination and DNA repair, while the RuvA-RuvB complex plays an important role in the rescue of blocked DNA replication forks via replication fork reversal (RFR). RuvA specifically binds to HJ cruciform DNA, conferring on it an open structure. The RuvB hexamer acts as an ATP-dependent pump, pulling dsDNA into and through the RuvAB complex. RuvB forms 2 homohexamers on either side of HJ DNA bound by 1 or 2 RuvA tetramers; 4 subunits per hexamer contact DNA at a time. Coordinated motions by a converter formed by DNA-disengaged RuvB subunits stimulates ATP hydrolysis and nucleotide exchange. Immobilization of the converter enables RuvB to convert the ATP-contained energy into a lever motion, pulling 2 nucleotides of DNA out of the RuvA tetramer per ATP hydrolyzed, thus driving DNA branch migration. The RuvB motors rotate together with the DNA substrate, which together with the progressing nucleotide cycle form the mechanistic basis for DNA recombination by continuous HJ branch migration. Branch migration allows RuvC to scan DNA until it finds its consensus sequence, where it cleaves and resolves cruciform DNA. In Sodalis glossinidius (strain morsitans), this protein is Holliday junction branch migration complex subunit RuvB.